The primary structure comprises 208 residues: Uridine kinase (208 aa).

An ATP-binding site is contributed by 12–19; that stretch reads GGSGGGKT.

This sequence belongs to the uridine kinase family.

Its subcellular location is the cytoplasm. It carries out the reaction uridine + ATP = UMP + ADP + H(+). The catalysed reaction is cytidine + ATP = CMP + ADP + H(+). It participates in pyrimidine metabolism; CTP biosynthesis via salvage pathway; CTP from cytidine: step 1/3. It functions in the pathway pyrimidine metabolism; UMP biosynthesis via salvage pathway; UMP from uridine: step 1/1. The protein is Uridine kinase of Streptococcus pyogenes serotype M18 (strain MGAS8232).